Here is a 242-residue protein sequence, read N- to C-terminus: Small ribosomal subunit protein uS2 (242 aa).

Belongs to the universal ribosomal protein uS2 family.

The sequence is that of Small ribosomal subunit protein uS2 from Idiomarina loihiensis (strain ATCC BAA-735 / DSM 15497 / L2-TR).